We begin with the raw amino-acid sequence, 453 residues long: Presenilin-like protein At1g08700 (453 aa).

At 1–8 the chain is on the cytoplasmic side; the sequence is MESSILDS. The helical transmembrane segment at 9–29 threads the bilayer; the sequence is LGVEIIGVMAPVSICMFLVVL. The Lumenal portion of the chain corresponds to 30 to 68; sequence LTYSLSVTSDPQIRSAANLIYIENPSDSTTVKLEGSLAN. The chain crosses the membrane as a helical span at residues 69-89; the sequence is AIVFVVLIAAVTFILVLLFYY. At 90–103 the chain is on the cytoplasmic side; that stretch reads NFTNFLKHYMRFSA. A helical membrane pass occupies residues 104–124; sequence FFVLGTMGGAIFLSIIQHFSI. The Lumenal segment spans residues 125 to 132; the sequence is PVDSITCF. The chain crosses the membrane as a helical span at residues 133-153; the sequence is ILLFNFTILGTLSVFAGGIPI. At 154–159 the chain is on the cytoplasmic side; it reads VLRQCY. 2 helical membrane passes run 160-180 and 181-201; these read MVVM…WTTW and FILV…GGPL. Aspartate 190 is a catalytic residue. Residues 202–369 lie on the Cytoplasmic side of the membrane; that stretch reads KLLVELASSR…VVDISNRGIK (168 aa). 2 disordered regions span residues 226 to 248 and 292 to 329; these read VSSG…GGGV and IGNG…DRES. The segment covering 227–240 has biased composition (low complexity); that stretch reads SSGNQRRNRGSSLR. Position 296 is a phosphoserine (serine 296). Residues 309-320 are compositionally biased toward polar residues; that stretch reads PSASEHSTSVGT. The helical transmembrane segment at 370–390 threads the bilayer; the sequence is LGLGDFIFYSVLVGRAAMYDL. The active site involves aspartate 374. The Lumenal segment spans residues 391 to 392; sequence MT. Residues 393–413 form a helical membrane-spanning segment; it reads VYACYLAIISGLGCTLILLSV. Topologically, residues 414–417 are cytoplasmic; it reads YNRA. The helical intramembrane region spans 418-438; it reads LPALPISIMLGVVFYFLTRLL. The short motif at 419-421 is the PAL element; sequence PAL. Residues 439–453 lie on the Cytoplasmic side of the membrane; that stretch reads MEPFVVGVTTNLMMF.

The protein belongs to the peptidase A22A family. As to quaternary structure, homodimer. Probable component of the gamma-secretase complex, a complex composed of a presenilin homodimer, nicastrin, APH1 and PEN2.

The protein localises to the endoplasmic reticulum membrane. It is found in the golgi apparatus membrane. In terms of biological role, probable subunit of the gamma-secretase complex, an endoprotease complex that catalyzes the intramembrane cleavage of integral membrane proteins such as Notch receptors. The protein is Presenilin-like protein At1g08700 of Arabidopsis thaliana (Mouse-ear cress).